Reading from the N-terminus, the 61-residue chain is Large ribosomal subunit protein uL30 (61 aa).

It belongs to the universal ribosomal protein uL30 family. As to quaternary structure, part of the 50S ribosomal subunit.

This Nitrosomonas eutropha (strain DSM 101675 / C91 / Nm57) protein is Large ribosomal subunit protein uL30.